A 191-amino-acid polypeptide reads, in one-letter code: MALNGPQKTVVQLVSVVVVMGGLAWASVPFYDWFCRVTGFGGATGVAEAGSDTILDKTIKVRFDASKERGMPWEFRPVQTEMELRIGETGLAFYEAYNPTDRPVAGQASYNVAPYSAGGYFDKIACFCFEEQVLQPGERVQMPVTFFVDPEIVNDRDAKYVHTITLSYTFYEIDLPEGYAALDAGEKTNTN.

Residues 1 to 9 (MALNGPQKT) are Cytoplasmic-facing. Residues 10 to 30 (VVQLVSVVVVMGGLAWASVPF) traverse the membrane as a helical; Signal-anchor for type II membrane protein segment. At 31–191 (YDWFCRVTGF…LDAGEKTNTN (161 aa)) the chain is on the periplasmic side.

This sequence belongs to the COX11/CtaG family.

It localises to the cell inner membrane. Its function is as follows. Exerts its effect at some terminal stage of cytochrome c oxidase synthesis, probably by being involved in the insertion of the copper B into subunit I. The polypeptide is Cytochrome c oxidase assembly protein CtaG (Ruegeria pomeroyi (strain ATCC 700808 / DSM 15171 / DSS-3) (Silicibacter pomeroyi)).